Consider the following 398-residue polypeptide: Argininosuccinate synthase (398 aa).

Residue 10 to 18 (AYSGGLDTS) coordinates ATP. Tyrosine 87 serves as a coordination point for L-citrulline. Glycine 117 is an ATP binding site. Positions 119, 123, and 124 each coordinate L-aspartate. Asparagine 123 lines the L-citrulline pocket. Arginine 127, serine 175, glutamate 260, and tyrosine 272 together coordinate L-citrulline.

This sequence belongs to the argininosuccinate synthase family. Type 1 subfamily. As to quaternary structure, homotetramer.

Its subcellular location is the cytoplasm. It catalyses the reaction L-citrulline + L-aspartate + ATP = 2-(N(omega)-L-arginino)succinate + AMP + diphosphate + H(+). Its pathway is amino-acid biosynthesis; L-arginine biosynthesis; L-arginine from L-ornithine and carbamoyl phosphate: step 2/3. In Lactococcus lactis subsp. lactis (strain IL1403) (Streptococcus lactis), this protein is Argininosuccinate synthase.